Reading from the N-terminus, the 389-residue chain is tRNA-specific 2-thiouridylase MnmA (389 aa).

Residues 34 to 41 (AMSGGVDS) and L60 each bind ATP. The active-site Nucleophile is C128. C128 and C225 are joined by a disulfide. G152 is a binding site for ATP. The interaction with tRNA stretch occupies residues 174-176 (RDQ). C225 serves as the catalytic Cysteine persulfide intermediate.

Belongs to the MnmA/TRMU family.

It localises to the cytoplasm. The enzyme catalyses S-sulfanyl-L-cysteinyl-[protein] + uridine(34) in tRNA + AH2 + ATP = 2-thiouridine(34) in tRNA + L-cysteinyl-[protein] + A + AMP + diphosphate + H(+). In terms of biological role, catalyzes the 2-thiolation of uridine at the wobble position (U34) of tRNA, leading to the formation of s(2)U34. In Paracoccus denitrificans (strain Pd 1222), this protein is tRNA-specific 2-thiouridylase MnmA.